We begin with the raw amino-acid sequence, 206 residues long: Holliday junction branch migration complex subunit RuvA (206 aa).

Positions 1–63 (MISSLRGDVI…DDAHTLYAFS (63 aa)) are domain I. Positions 64-142 (TSEQRETFGI…ALEATSGQAT (79 aa)) are domain II. The interval 143 to 150 (IGDIAATG) is flexible linker. Residues 151–206 (NDTALQSQVVEALVGLGFTEAKAATAVKKILEEQNGTTDPSSVLREALQRLSGQKR) form a domain III region.

The protein belongs to the RuvA family. Homotetramer. Forms an RuvA(8)-RuvB(12)-Holliday junction (HJ) complex. HJ DNA is sandwiched between 2 RuvA tetramers; dsDNA enters through RuvA and exits via RuvB. An RuvB hexamer assembles on each DNA strand where it exits the tetramer. Each RuvB hexamer is contacted by two RuvA subunits (via domain III) on 2 adjacent RuvB subunits; this complex drives branch migration. In the full resolvosome a probable DNA-RuvA(4)-RuvB(12)-RuvC(2) complex forms which resolves the HJ.

It localises to the cytoplasm. The RuvA-RuvB-RuvC complex processes Holliday junction (HJ) DNA during genetic recombination and DNA repair, while the RuvA-RuvB complex plays an important role in the rescue of blocked DNA replication forks via replication fork reversal (RFR). RuvA specifically binds to HJ cruciform DNA, conferring on it an open structure. The RuvB hexamer acts as an ATP-dependent pump, pulling dsDNA into and through the RuvAB complex. HJ branch migration allows RuvC to scan DNA until it finds its consensus sequence, where it cleaves and resolves the cruciform DNA. The protein is Holliday junction branch migration complex subunit RuvA of Corynebacterium urealyticum (strain ATCC 43042 / DSM 7109).